A 166-amino-acid chain; its full sequence is Cyclic pyranopterin monophosphate synthase (166 aa).

Substrate contacts are provided by residues 83-85 (LCH) and 121-122 (ME). The active site involves aspartate 136.

It belongs to the MoaC family. As to quaternary structure, homohexamer; trimer of dimers.

It carries out the reaction (8S)-3',8-cyclo-7,8-dihydroguanosine 5'-triphosphate = cyclic pyranopterin phosphate + diphosphate. The protein operates within cofactor biosynthesis; molybdopterin biosynthesis. Its function is as follows. Catalyzes the conversion of (8S)-3',8-cyclo-7,8-dihydroguanosine 5'-triphosphate to cyclic pyranopterin monophosphate (cPMP). This chain is Cyclic pyranopterin monophosphate synthase, found in Syntrophobacter fumaroxidans (strain DSM 10017 / MPOB).